The sequence spans 421 residues: Gamma-glutamyl phosphate reductase (421 aa).

Belongs to the gamma-glutamyl phosphate reductase family.

The protein localises to the cytoplasm. It carries out the reaction L-glutamate 5-semialdehyde + phosphate + NADP(+) = L-glutamyl 5-phosphate + NADPH + H(+). It functions in the pathway amino-acid biosynthesis; L-proline biosynthesis; L-glutamate 5-semialdehyde from L-glutamate: step 2/2. Its function is as follows. Catalyzes the NADPH-dependent reduction of L-glutamate 5-phosphate into L-glutamate 5-semialdehyde and phosphate. The product spontaneously undergoes cyclization to form 1-pyrroline-5-carboxylate. This chain is Gamma-glutamyl phosphate reductase, found in Pseudomonas aeruginosa (strain LESB58).